A 360-amino-acid polypeptide reads, in one-letter code: Mitogen-activated protein kinase 1 (360 aa).

An N-acetylalanine modification is found at Ala-2. A Protein kinase domain is found at 25–313 (YTNLSYIGEG…VEQALAHPYL (289 aa)). Ser-29 carries the phosphoserine; by SGK1 modification. Residues 31–39 (IGEGAYGMV) and Lys-54 each bind ATP. Asp-149 functions as the Proton acceptor in the catalytic mechanism. Thr-185 is subject to Phosphothreonine; by MAP2K1 and MAP2K2. The TXY motif lies at 185–187 (TEY). Tyr-187 bears the Phosphotyrosine; by MAP2K1 and MAP2K2 mark. A Phosphothreonine; by autocatalysis modification is found at Thr-190. Phosphoserine occurs at positions 246, 248, and 284.

Belongs to the protein kinase superfamily. CMGC Ser/Thr protein kinase family. MAP kinase subfamily. As to quaternary structure, binds both upstream activators and downstream substrates in multimolecular complexes. Interacts with ADAM15, ARHGEF2, ARRB2, DAPK1 (via death domain), HSF4, IER3, IPO7, MKNK2, MORG1, NISCH, PEA15, SGK1, and isoform 1 of NEK2. Interacts (via phosphorylated form) with TPR (via C-terminal region and phosphorylated form); the interaction requires dimerization of MAPK1/ERK2 and increases following EGF stimulation. Interacts with MAP2K1. Interacts with DUSP6. Interacts (phosphorylated form) with CAV2 ('Tyr-19'-phosphorylated form); the interaction, promoted by insulin, leads to nuclear location and MAPK1 activation. MKNK2 isoform 1 binding prevents from dephosphorylation and inactivation. Interacts with DCC. The phosphorylated form interacts with PML. Interacts with STYX. Interacts with CDK2AP2. Interacts with CAVIN4. Interacts with DUSP7; the interaction enhances DUSP7 phosphatase activity. Interacts with GIT1; this interaction is necessary for MAPK1 localization to focal adhesions. Interacts with ZNF263. Interacts with phosphoglycerate kinase PGK1; the interaction is direct, occurs under hypoxic conditions, and promotes interaction between PGK1 and PIN1. The cofactor is Mg(2+). Post-translationally, dually phosphorylated on Thr-185 and Tyr-187, which activates the enzyme. Phosphorylated upon FLT3 and KIT signaling. Phosphorylation on Ser-29 by SGK1 results in its activation by enhancing its interaction with MAP2K1/MEK1 and MAP2K2/MEK2. Phosphorylation at Ser-246 and Ser-248 as well as autophosphorylation at Thr-190 promote nuclear localization. Ligand-activated ALK induces tyrosine phosphorylation. Dephosphorylated by PTPRJ at Tyr-187. Dephosphorylated by DUSP1 and DUSP2 at Thr-185 and Tyr-187. In terms of processing, ISGylated. Ubiquitinated by TRIM15 via 'Lys-63'-linked ubiquitination; leading to activation. Deubiquitinated by CYLD.

The protein resides in the nucleus. Its subcellular location is the cytoplasm. The protein localises to the cytoskeleton. It is found in the microtubule organizing center. It localises to the centrosome. The protein resides in the spindle. Its subcellular location is the membrane. The protein localises to the caveola. It is found in the cell junction. It localises to the focal adhesion. It carries out the reaction L-seryl-[protein] + ATP = O-phospho-L-seryl-[protein] + ADP + H(+). The catalysed reaction is L-threonyl-[protein] + ATP = O-phospho-L-threonyl-[protein] + ADP + H(+). Its activity is regulated as follows. Phosphorylated by MAP2K1/MEK1 and MAP2K2/MEK2 on Thr-185 and Tyr-187 in response to external stimuli like insulin or NGF. Both phosphorylations are required for activity. This phosphorylation causes dramatic conformational changes, which enable full activation and interaction of MAPK1/ERK2 with its substrates. Phosphorylation on Ser-29 by SGK1 results in its activation by enhancing its interaction with MAP2K1/MEK1 and MAP2K2/MEK2. Dephosphorylated and inactivated by DUSP1, DUSP3, DUSP6 and DUSP9. Inactivated by pyrimidylpyrrole inhibitors. Serine/threonine kinase which acts as an essential component of the MAP kinase signal transduction pathway. MAPK1/ERK2 and MAPK3/ERK1 are the 2 MAPKs which play an important role in the MAPK/ERK cascade. They participate also in a signaling cascade initiated by activated KIT and KITLG/SCF. Depending on the cellular context, the MAPK/ERK cascade mediates diverse biological functions such as cell growth, adhesion, survival and differentiation through the regulation of transcription, translation, cytoskeletal rearrangements. The MAPK/ERK cascade also plays a role in initiation and regulation of meiosis, mitosis, and postmitotic functions in differentiated cells by phosphorylating a number of transcription factors. About 160 substrates have already been discovered for ERKs. Many of these substrates are localized in the nucleus, and seem to participate in the regulation of transcription upon stimulation. However, other substrates are found in the cytosol as well as in other cellular organelles, and those are responsible for processes such as translation, mitosis and apoptosis. Moreover, the MAPK/ERK cascade is also involved in the regulation of the endosomal dynamics, including lysosome processing and endosome cycling through the perinuclear recycling compartment (PNRC); as well as in the fragmentation of the Golgi apparatus during mitosis. The substrates include transcription factors (such as ATF2, BCL6, ELK1, ERF, FOS, HSF4 or SPZ1), cytoskeletal elements (such as CANX, CTTN, GJA1, MAP2, MAPT, PXN, SORBS3 or STMN1), regulators of apoptosis (such as BAD, BTG2, CASP9, DAPK1, IER3, MCL1 or PPARG), regulators of translation (such as EIF4EBP1 and FXR1) and a variety of other signaling-related molecules (like ARHGEF2, DCC, FRS2 or GRB10). Protein kinases (such as RAF1, RPS6KA1/RSK1, RPS6KA3/RSK2, RPS6KA2/RSK3, RPS6KA6/RSK4, SYK, MKNK1/MNK1, MKNK2/MNK2, RPS6KA5/MSK1, RPS6KA4/MSK2, MAPKAPK3 or MAPKAPK5) and phosphatases (such as DUSP1, DUSP4, DUSP6 or DUSP16) are other substrates which enable the propagation the MAPK/ERK signal to additional cytosolic and nuclear targets, thereby extending the specificity of the cascade. Mediates phosphorylation of TPR in response to EGF stimulation. May play a role in the spindle assembly checkpoint. Phosphorylates PML and promotes its interaction with PIN1, leading to PML degradation. Phosphorylates CDK2AP2. Phosphorylates phosphoglycerate kinase PGK1 under hypoxic conditions to promote its targeting to the mitochondrion and suppress the formation of acetyl-coenzyme A from pyruvate. Its function is as follows. Acts as a transcriptional repressor. Binds to a [GC]AAA[GC] consensus sequence. Repress the expression of interferon gamma-induced genes. Seems to bind to the promoter of CCL5, DMP1, IFIH1, IFITM1, IRF7, IRF9, LAMP3, OAS1, OAS2, OAS3 and STAT1. Transcriptional activity is independent of kinase activity. This Bos taurus (Bovine) protein is Mitogen-activated protein kinase 1.